We begin with the raw amino-acid sequence, 203 residues long: Probable GTP-binding protein EngB (203 aa).

The EngB-type G domain occupies 21-196 (GAPEIAFLGR…WKKIFEAAGT (176 aa)). GTP is bound by residues 29 to 36 (GRSNVGKS), 55 to 59 (GRTQT), 79 to 82 (DLPG), 146 to 149 (TKID), and 175 to 177 (FSA). 2 residues coordinate Mg(2+): S36 and T57.

Belongs to the TRAFAC class TrmE-Era-EngA-EngB-Septin-like GTPase superfamily. EngB GTPase family. Requires Mg(2+) as cofactor.

Functionally, necessary for normal cell division and for the maintenance of normal septation. The protein is Probable GTP-binding protein EngB of Koribacter versatilis (strain Ellin345).